A 227-amino-acid polypeptide reads, in one-letter code: MSKEIPVITVDGPSGSGKGTLAQQLAQHLEWHYLDSGAMYRVLALAADKHGIAPNAPKQLETLAQNLDVRFISGLEGMPARVFLEGSEVSDSIRREECGNAASKIAALAEVRGALLMRQRAFRKAPGLVTDGRDMGTVVFPEADLKIFLTASPYERARRRYKQLKEKGIGANLKNLEKEIAERDRRDCERNIAPLKSADDAIILDSTNLAIKEVFQQVLPWLSGKNT.

12–20 is an ATP binding site; that stretch reads GPSGSGKGT.

The protein belongs to the cytidylate kinase family. Type 1 subfamily.

Its subcellular location is the cytoplasm. It carries out the reaction CMP + ATP = CDP + ADP. It catalyses the reaction dCMP + ATP = dCDP + ADP. The chain is Cytidylate kinase from Nitrosococcus oceani (strain ATCC 19707 / BCRC 17464 / JCM 30415 / NCIMB 11848 / C-107).